Reading from the N-terminus, the 484-residue chain is MPGTSVSDLSTATAVDAPALLPLPVARPSAPAVVRGKLYIKTHGCQMNEYDSAKMADVLAASEGLELTDNPEEADVVLVNTCSIREKAQEKVFSQLGRWKALKAGGKPVIIGVGGCVASQEGEAIVKRAPYVDLVFGPQTLHRLPELIRARRESGKSQVDISFPEIEKFDRLPEPRAEGPSAFVSIMEGCSKYCSFCVVPYTRGEEVSRPFEDVLVEVAQLAAQGVREINLLGQNVNAYRGAYGADAGDAAQYADLGLLIRTIAQIEGIGRIRFTTSHPLEFSDSLVDAYRDVPQLANYLHLPVQAGSDRILSAMKRGYTALEFKSRIRKLRAVRPDISISSDFIVGFPGETEADFEKTMKLIEDVGFDQSFSFVYSRRPGTPASDLQDDTPETVKQARLARLQAHISAHAASISQSMVGSVQRVLVEGPSRRDPNELTGKSENMRPVNFPGNPRLIGQFVDVLITEAMSNSLRGRIQLDDSAH.

The MTTase N-terminal domain maps to 36 to 153 (GKLYIKTHGC…LPELIRARRE (118 aa)). Residues Cys45, Cys82, Cys116, Cys190, Cys194, and Cys197 each contribute to the [4Fe-4S] cluster site. One can recognise a Radical SAM core domain in the interval 176–415 (RAEGPSAFVS…HISAHAASIS (240 aa)). In terms of domain architecture, TRAM spans 416 to 479 (QSMVGSVQRV…SNSLRGRIQL (64 aa)). Positions 428-450 (EGPSRRDPNELTGKSENMRPVNF) are disordered.

It belongs to the methylthiotransferase family. MiaB subfamily. Monomer. It depends on [4Fe-4S] cluster as a cofactor.

It localises to the cytoplasm. The catalysed reaction is N(6)-dimethylallyladenosine(37) in tRNA + (sulfur carrier)-SH + AH2 + 2 S-adenosyl-L-methionine = 2-methylsulfanyl-N(6)-dimethylallyladenosine(37) in tRNA + (sulfur carrier)-H + 5'-deoxyadenosine + L-methionine + A + S-adenosyl-L-homocysteine + 2 H(+). In terms of biological role, catalyzes the methylthiolation of N6-(dimethylallyl)adenosine (i(6)A), leading to the formation of 2-methylthio-N6-(dimethylallyl)adenosine (ms(2)i(6)A) at position 37 in tRNAs that read codons beginning with uridine. This chain is tRNA-2-methylthio-N(6)-dimethylallyladenosine synthase, found in Xanthomonas oryzae pv. oryzae (strain MAFF 311018).